The chain runs to 754 residues: Cytosolic neutral trehalase (754 aa).

Over residues 1–10 (MDGKVNNNPP) the composition is skewed to polar residues. 2 disordered regions span residues 1 to 47 (MDGK…LSKN) and 54 to 73 (TFSV…YTSP). Residues D117, D119, N121, Q123, and D128 each contribute to the Ca(2+) site. Substrate contacts are provided by residues R305, 312–313 (WD), N349, 358–360 (RSQ), E427, R476, and G479. Catalysis depends on proton donor/acceptor residues D481 and E676.

The protein belongs to the glycosyl hydrolase 37 family. Ca(2+) serves as cofactor.

The protein localises to the cytoplasm. It catalyses the reaction alpha,alpha-trehalose + H2O = alpha-D-glucose + beta-D-glucose. It participates in carbohydrate degradation. Hydrolyzes intracellular trehalose to glucose. The disaccharide trehalose serves as a storage molecule for energy and carbohydrates that is mobilized during nutrient stress. This Kluyveromyces lactis (strain ATCC 8585 / CBS 2359 / DSM 70799 / NBRC 1267 / NRRL Y-1140 / WM37) (Yeast) protein is Cytosolic neutral trehalase.